We begin with the raw amino-acid sequence, 393 residues long: Formate-dependent phosphoribosylglycinamide formyltransferase (393 aa).

N(1)-(5-phospho-beta-D-ribosyl)glycinamide contacts are provided by residues 22–23 (EL) and Glu-82. ATP-binding positions include Arg-114, Lys-155, 160–165 (SSGHGQ), 195–198 (EGFV), and Glu-203. An ATP-grasp domain is found at 119-308 (RLAAEKLKLP…EFALHARAIL (190 aa)). The Mg(2+) site is built by Glu-267 and Glu-279. Residues Asp-286, Lys-356, and 363 to 364 (RR) each bind N(1)-(5-phospho-beta-D-ribosyl)glycinamide.

The protein belongs to the PurK/PurT family. As to quaternary structure, homodimer.

It carries out the reaction N(1)-(5-phospho-beta-D-ribosyl)glycinamide + formate + ATP = N(2)-formyl-N(1)-(5-phospho-beta-D-ribosyl)glycinamide + ADP + phosphate + H(+). Its pathway is purine metabolism; IMP biosynthesis via de novo pathway; N(2)-formyl-N(1)-(5-phospho-D-ribosyl)glycinamide from N(1)-(5-phospho-D-ribosyl)glycinamide (formate route): step 1/1. Functionally, involved in the de novo purine biosynthesis. Catalyzes the transfer of formate to 5-phospho-ribosyl-glycinamide (GAR), producing 5-phospho-ribosyl-N-formylglycinamide (FGAR). Formate is provided by PurU via hydrolysis of 10-formyl-tetrahydrofolate. This Histophilus somni (strain 129Pt) (Haemophilus somnus) protein is Formate-dependent phosphoribosylglycinamide formyltransferase.